We begin with the raw amino-acid sequence, 363 residues long: Phospho-N-acetylmuramoyl-pentapeptide-transferase (363 aa).

Transmembrane regions (helical) follow at residues 3–23 (QILFAGVIGLFLTLVGTPLLI), 48–68 (GTPTMGGIAFILATVAAYFLA), 83–103 (PTFSGLLVLGLMVGMGLVGFL), 121–141 (AKMIGQLTVGIAFAVLSLQFA), 159–179 (FGWTIGPVLFVVWALFMILAM), 192–212 (LATGASVLVFGAYTFIGVWQF), 234–254 (PLDLAVVASALMGSCLGFLWW), 261–281 (IFMGDTGSLALGGVLAGLAIC), 286–306 (LLMAILGGLFVLITMSVVIQV), and 340–360 (FWIIQGICVIVGLGLFYAGWA).

This sequence belongs to the glycosyltransferase 4 family. MraY subfamily. Mg(2+) serves as cofactor.

The protein resides in the cell membrane. The catalysed reaction is UDP-N-acetyl-alpha-D-muramoyl-L-alanyl-gamma-D-glutamyl-meso-2,6-diaminopimeloyl-D-alanyl-D-alanine + di-trans,octa-cis-undecaprenyl phosphate = di-trans,octa-cis-undecaprenyl diphospho-N-acetyl-alpha-D-muramoyl-L-alanyl-D-glutamyl-meso-2,6-diaminopimeloyl-D-alanyl-D-alanine + UMP. It functions in the pathway cell wall biogenesis; peptidoglycan biosynthesis. Catalyzes the initial step of the lipid cycle reactions in the biosynthesis of the cell wall peptidoglycan: transfers peptidoglycan precursor phospho-MurNAc-pentapeptide from UDP-MurNAc-pentapeptide onto the lipid carrier undecaprenyl phosphate, yielding undecaprenyl-pyrophosphoryl-MurNAc-pentapeptide, known as lipid I. The sequence is that of Phospho-N-acetylmuramoyl-pentapeptide-transferase from Streptomyces coelicolor (strain ATCC BAA-471 / A3(2) / M145).